The primary structure comprises 433 residues: tRNA-2-methylthio-N(6)-dimethylallyladenosine synthase (433 aa).

The 116-residue stretch at 4 to 119 (KKLFIQTLGC…ITQAIKTPKF (116 aa)) folds into the MTTase N-terminal domain. The [4Fe-4S] cluster site is built by Cys13, Cys50, Cys82, Cys151, Cys155, and Cys158. Residues 137-370 (RNSIYKSYIN…QNRHSEILDE (234 aa)) form the Radical SAM core domain. The TRAM domain maps to 373–433 (KKQENKTFKV…KRMVLYGEIV (61 aa)).

Belongs to the methylthiotransferase family. MiaB subfamily. Monomer. The cofactor is [4Fe-4S] cluster.

The protein localises to the cytoplasm. It carries out the reaction N(6)-dimethylallyladenosine(37) in tRNA + (sulfur carrier)-SH + AH2 + 2 S-adenosyl-L-methionine = 2-methylsulfanyl-N(6)-dimethylallyladenosine(37) in tRNA + (sulfur carrier)-H + 5'-deoxyadenosine + L-methionine + A + S-adenosyl-L-homocysteine + 2 H(+). Functionally, catalyzes the methylthiolation of N6-(dimethylallyl)adenosine (i(6)A), leading to the formation of 2-methylthio-N6-(dimethylallyl)adenosine (ms(2)i(6)A) at position 37 in tRNAs that read codons beginning with uridine. The chain is tRNA-2-methylthio-N(6)-dimethylallyladenosine synthase from Campylobacter jejuni (strain RM1221).